Consider the following 54-residue polypeptide: H-bracotoxin-Cf4 (54 aa).

The first 21 residues, 1–21, serve as a signal peptide directing secretion; the sequence is MSKLFIFFLLVALLAFVSSEA. 3 disulfide bridges follow: cysteine 24–cysteine 39, cysteine 31–cysteine 43, and cysteine 38–cysteine 53.

As to expression, expressed by the venom duct.

The protein localises to the secreted. Its function is as follows. This endoparasitoid wasp peptide has a role in disruption of the cellular host immune response, since it reduces the capacity of D.saccharalis hemocytes to encapsulate foreign bodies. On the other hand, it shows no effect on the humoral immune response, since it has no effect on phenoloxidase activity. This is H-bracotoxin-Cf4 from Cotesia flavipes (Parasitic wasp).